The following is a 153-amino-acid chain: MNDQIILALDVGERRIGVAISDADARIAAPLTTINAHPPERAIAQIVRLVQERGVSRVVVGLPLTMRGERGPQAEVVQRFADTLSSALSCPVEMFDERLTSVAAEQMLRNLGLKPAKIKAQIDQVAASIILQDYLDARRSNPNRSHELPHSSD.

Belongs to the YqgF nuclease family.

The protein resides in the cytoplasm. Functionally, could be a nuclease involved in processing of the 5'-end of pre-16S rRNA. The protein is Putative pre-16S rRNA nuclease of Chloroflexus aurantiacus (strain ATCC 29366 / DSM 635 / J-10-fl).